We begin with the raw amino-acid sequence, 139 residues long: Ribonuclease P protein component (139 aa).

It belongs to the RnpA family. Consists of a catalytic RNA component (M1 or rnpB) and a protein subunit.

It carries out the reaction Endonucleolytic cleavage of RNA, removing 5'-extranucleotides from tRNA precursor.. RNaseP catalyzes the removal of the 5'-leader sequence from pre-tRNA to produce the mature 5'-terminus. It can also cleave other RNA substrates such as 4.5S RNA. The protein component plays an auxiliary but essential role in vivo by binding to the 5'-leader sequence and broadening the substrate specificity of the ribozyme. The polypeptide is Ribonuclease P protein component (Paraburkholderia xenovorans (strain LB400)).